A 239-amino-acid polypeptide reads, in one-letter code: Purine nucleoside phosphorylase DeoD-type (239 aa).

H5 contacts a purine D-ribonucleoside. Phosphate contacts are provided by residues G21, R25, R44, and 88 to 91; that span reads RVGS. A purine D-ribonucleoside is bound by residues 180 to 182 and 204 to 205; these read EME and SD. The active-site Proton donor is the D205.

It belongs to the PNP/UDP phosphorylase family. Homohexamer; trimer of homodimers.

The catalysed reaction is a purine D-ribonucleoside + phosphate = a purine nucleobase + alpha-D-ribose 1-phosphate. The enzyme catalyses a purine 2'-deoxy-D-ribonucleoside + phosphate = a purine nucleobase + 2-deoxy-alpha-D-ribose 1-phosphate. Its function is as follows. Catalyzes the reversible phosphorolytic breakdown of the N-glycosidic bond in the beta-(deoxy)ribonucleoside molecules, with the formation of the corresponding free purine bases and pentose-1-phosphate. The protein is Purine nucleoside phosphorylase DeoD-type of Salmonella arizonae (strain ATCC BAA-731 / CDC346-86 / RSK2980).